We begin with the raw amino-acid sequence, 404 residues long: Mitochondrial potassium channel (404 aa).

The transit peptide at 1-30 (MTGRSRVLAMRHVGGVSPVLVRRDLFLTRT) directs the protein to the mitochondrion. Over 31–196 (LCSHGPSQPR…KERTRAERTK (166 aa)) the chain is Mitochondrial matrix. Residue Ser-65 is modified to Phosphoserine. Positions 111-138 (VREAREDLESQQTKLKEVRDRLDRISRD) form a coiled coil. The chain crosses the membrane as a helical span at residues 197-217 (NWSLIGSVLGALIGVAGSTYV). At 218–380 (NRVRLQELKA…LEAQVNRNTV (163 aa)) the chain is on the mitochondrial intermembrane side. A helical transmembrane segment spans residues 381 to 401 (YGTLVTCATFVAVLPVLYMLF). The Mitochondrial matrix portion of the chain corresponds to 402–404 (RAS).

The mitochondrial potassium channel (mitoK(ATP)) forms a heteromultimer.

It is found in the mitochondrion inner membrane. It catalyses the reaction K(+)(in) = K(+)(out). Its activity is regulated as follows. Channel activity inhibited by ATP via ABCB8/MITOSUR subunit. Functionally, pore-forming subunit of the mitochondrial ATP-gated potassium channel (mitoK(ATP)). Together with ATP-binding subunit ABCB8/MITOSUR of the mitoK(ATP) channel, mediates ATP-dependent K(+) currents across the mitochondrial inner membrane. An increase in ATP intracellular levels closes the channel, inhibiting K(+) transport, whereas a decrease in ATP levels enhances K(+) uptake in the mitochondrial matrix. May contribute to the homeostatic control of cellular metabolism under stress conditions by regulating the mitochondrial matrix volume. The chain is Mitochondrial potassium channel from Bos taurus (Bovine).